Here is a 270-residue protein sequence, read N- to C-terminus: Phthiotriol/phenolphthiotriol dimycocerosates methyltransferase (270 aa).

It belongs to the methyltransferase superfamily. Phthiotriol/phenolphthiotriol dimycocerosates methyltransferase family.

In terms of biological role, catalyzes the methylation of the lipid moiety of the intermediate compounds phthiotriol and glycosylated phenolphthiotriol dimycoserosates to form phthiocerol dimycocerosates (DIM A) and glycosylated phenolphthiocerol dimycocerosates (PGL). In Mycobacterium leprae (strain TN), this protein is Phthiotriol/phenolphthiotriol dimycocerosates methyltransferase.